The chain runs to 180 residues: Segregation and condensation protein B (180 aa).

Belongs to the ScpB family. Homodimer. Homodimerization may be required to stabilize the binding of ScpA to the Smc head domains. Component of a cohesin-like complex composed of ScpA, ScpB and the Smc homodimer, in which ScpA and ScpB bind to the head domain of Smc. The presence of the three proteins is required for the association of the complex with DNA.

The protein localises to the cytoplasm. Functionally, participates in chromosomal partition during cell division. May act via the formation of a condensin-like complex containing Smc and ScpA that pull DNA away from mid-cell into both cell halves. The chain is Segregation and condensation protein B from Staphylococcus epidermidis (strain ATCC 35984 / DSM 28319 / BCRC 17069 / CCUG 31568 / BM 3577 / RP62A).